The following is a 255-amino-acid chain: Trans-aconitate 2-methyltransferase (255 aa).

Belongs to the methyltransferase superfamily. Tam family.

The protein localises to the cytoplasm. The enzyme catalyses trans-aconitate + S-adenosyl-L-methionine = (E)-3-(methoxycarbonyl)pent-2-enedioate + S-adenosyl-L-homocysteine. Its function is as follows. Catalyzes the S-adenosylmethionine monomethyl esterification of trans-aconitate. The polypeptide is Trans-aconitate 2-methyltransferase (Mycolicibacterium gilvum (strain PYR-GCK) (Mycobacterium gilvum (strain PYR-GCK))).